The chain runs to 531 residues: High affinity cysteine transporter (531 aa).

Topologically, residues 1–54 (MSKVDVKIGADSISSSDEILVPSRLADVTLAFMEENDAAVPEITPEQEKKLKRK) are cytoplasmic. The chain crosses the membrane as a helical span at residues 55 to 75 (LFLTIFTFVSAINLLLYMDKA). Residues 76–97 (TLSYDSILGFFEDTGLTQNTYN) lie on the Lumenal side of the membrane. The chain crosses the membrane as a helical span at residues 98–118 (TVNTLFYVGFAIGQFPGQYLA). Topologically, residues 119-120 (QK) are cytoplasmic. Residues 121–141 (LPLGKFLGGLLATWTILIFLS) form a helical membrane-spanning segment. At 142–154 (CTAYNFSGVVALR) the chain is on the lumenal side. Asn-146 carries N-linked (GlcNAc...) asparagine glycosylation. Residues 155–175 (FFLGLTESVVIPILITTMGMF) traverse the membrane as a helical segment. At 176–186 (FDASERAAAQP) the chain is on the cytoplasmic side. Residues 187-207 (FFFAACMGSPIPTGFIAYGVL) form a helical membrane-spanning segment. Over 208-218 (HITNPSISLWK) the chain is Lumenal. A helical membrane pass occupies residues 219-239 (IFTIIIGGLTFIMTVVVILWF). The Cytoplasmic portion of the chain corresponds to 240–285 (PNNPADVKFFSIQERVWIIRRVQASTGSSIEQKVFKKSQFREAMKD). Residues 286-306 (YITWLFGLFFLLQQLANNLPY) traverse the membrane as a helical segment. The Lumenal segment spans residues 307 to 324 (QQNLLFEGMGGVDALGST). The helical transmembrane segment at 325-345 (LVSVAGAGFAVVCAFIATLML) threads the bilayer. The Cytoplasmic portion of the chain corresponds to 346–352 (AKWKNIS). Residues 353–373 (ALTAIFWTLPALVGSIAAAAL) form a helical membrane-spanning segment. At 374–378 (PWDNK) the chain is on the lumenal side. A helical membrane pass occupies residues 379–399 (IGILANICMAGQIFGIPFIIA). The Cytoplasmic portion of the chain corresponds to 400–413 (LSWASSSASGYTKK). The helical transmembrane segment at 414-436 (LTRSSVSLFAMGIANIISPQIWR) threads the bilayer. The Lumenal portion of the chain corresponds to 437–447 (EKDSPRFLPAW). A helical transmembrane segment spans residues 448–468 (IVQIVLSFSLAPAILLLIHFI). Residues 469-498 (LKRRNNQRLKNYDENLQNYLDRIQLIESEN) adopt a coiled-coil conformation. Residues 469 to 531 (LKRRNNQRLK…LENETFIYPL (63 aa)) are Cytoplasmic-facing. Residues Ser-500 and Ser-501 each carry the phosphoserine modification.

Belongs to the major facilitator superfamily. Allantoate permease family.

The protein resides in the cell membrane. It localises to the endoplasmic reticulum membrane. In terms of biological role, high affinity cysteine-specific transporter. Major contributor to cysteine transport when cysteine, at low concentrations, is provided as the sole sulfur source. This chain is High affinity cysteine transporter (YCT1), found in Saccharomyces cerevisiae (strain ATCC 204508 / S288c) (Baker's yeast).